The primary structure comprises 365 residues: tRNA N6-adenosine threonylcarbamoyltransferase (365 aa).

Fe cation-binding residues include His119 and His123. Substrate is bound by residues 141–145 (LVSGG), Asp174, Gly187, and Asn288. A Fe cation-binding site is contributed by Asp316.

It belongs to the KAE1 / TsaD family. It depends on Fe(2+) as a cofactor.

Its subcellular location is the cytoplasm. It carries out the reaction L-threonylcarbamoyladenylate + adenosine(37) in tRNA = N(6)-L-threonylcarbamoyladenosine(37) in tRNA + AMP + H(+). Its function is as follows. Required for the formation of a threonylcarbamoyl group on adenosine at position 37 (t(6)A37) in tRNAs that read codons beginning with adenine. Is involved in the transfer of the threonylcarbamoyl moiety of threonylcarbamoyl-AMP (TC-AMP) to the N6 group of A37, together with TsaE and TsaB. TsaD likely plays a direct catalytic role in this reaction. This Agrobacterium fabrum (strain C58 / ATCC 33970) (Agrobacterium tumefaciens (strain C58)) protein is tRNA N6-adenosine threonylcarbamoyltransferase.